The following is a 226-amino-acid chain: Uracil-DNA glycosylase (226 aa).

Catalysis depends on Asp-64, which acts as the Proton acceptor.

The protein belongs to the uracil-DNA glycosylase (UDG) superfamily. UNG family.

It localises to the cytoplasm. The catalysed reaction is Hydrolyzes single-stranded DNA or mismatched double-stranded DNA and polynucleotides, releasing free uracil.. Excises uracil residues from the DNA which can arise as a result of misincorporation of dUMP residues by DNA polymerase or due to deamination of cytosine. This Fusobacterium nucleatum subsp. nucleatum (strain ATCC 25586 / DSM 15643 / BCRC 10681 / CIP 101130 / JCM 8532 / KCTC 2640 / LMG 13131 / VPI 4355) protein is Uracil-DNA glycosylase.